Reading from the N-terminus, the 290-residue chain is Sodium/potassium-transporting ATPase subunit beta-2 (290 aa).

Residues 1 to 39 are Cytoplasmic-facing; that stretch reads MVIQKEKKSCGQVVEEWKEFVWNPRTHQFMGRTGTSWAF. Residues 40-67 traverse the membrane as a helical; Signal-anchor for type II membrane protein segment; that stretch reads ILLFYLVFYGFLTAMFTLTMWVMLQTVS. Topologically, residues 68-290 are extracellular; the sequence is DHTPKYQDRL…VAFKLRINKT (223 aa). Asn96 and Asn118 each carry an N-linked (GlcNAc...) asparagine glycan. A disulfide bridge connects residues Cys129 and Cys150. N-linked (GlcNAc...) asparagine glycans are attached at residues Asn153 and Asn159. The cysteines at positions 160 and 177 are disulfide-linked. N-linked (GlcNAc...) asparagine glycosylation is found at Asn193, Asn197, and Asn238. The segment at 193 to 290 is immunoglobulin-like; sequence NQSMNVTCAG…VAFKLRINKT (98 aa). Residues Cys200 and Cys261 are joined by a disulfide bond.

Belongs to the X(+)/potassium ATPases subunit beta family. The sodium/potassium-transporting ATPase is composed of a catalytic alpha subunit, an auxiliary non-catalytic beta subunit and an additional regulatory subunit. Interacts with BSG.

The protein resides in the cell membrane. In terms of biological role, this is the non-catalytic component of the active enzyme, which catalyzes the hydrolysis of ATP coupled with the exchange of Na(+) and K(+) ions across the plasma membrane. The exact function of the beta-2 subunit is not known. Functionally, mediates cell adhesion of neurons and astrocytes, and promotes neurite outgrowth. The polypeptide is Sodium/potassium-transporting ATPase subunit beta-2 (ATP1B2) (Ochotona curzoniae (Black-lipped pika)).